Consider the following 89-residue polypeptide: Small ribosomal subunit protein uS15 (89 aa).

This sequence belongs to the universal ribosomal protein uS15 family. In terms of assembly, part of the 30S ribosomal subunit. Forms a bridge to the 50S subunit in the 70S ribosome, contacting the 23S rRNA.

In terms of biological role, one of the primary rRNA binding proteins, it binds directly to 16S rRNA where it helps nucleate assembly of the platform of the 30S subunit by binding and bridging several RNA helices of the 16S rRNA. Forms an intersubunit bridge (bridge B4) with the 23S rRNA of the 50S subunit in the ribosome. The polypeptide is Small ribosomal subunit protein uS15 (Cyanothece sp. (strain PCC 7425 / ATCC 29141)).